A 216-amino-acid polypeptide reads, in one-letter code: Cytidylate kinase (216 aa).

11-19 contacts ATP; the sequence is GPAGAGKGT.

Belongs to the cytidylate kinase family. Type 1 subfamily.

It localises to the cytoplasm. The catalysed reaction is CMP + ATP = CDP + ADP. It carries out the reaction dCMP + ATP = dCDP + ADP. This Mesorhizobium japonicum (strain LMG 29417 / CECT 9101 / MAFF 303099) (Mesorhizobium loti (strain MAFF 303099)) protein is Cytidylate kinase.